The primary structure comprises 509 residues: Mitogen-activated protein kinase sma-5 (509 aa).

The tract at residues 19–72 (DPITSMSPPQENRSPKAEYLNNFFNTNPTNGKSRGSQEAPRKPLGQTNLNVQGS) is disordered. 2 stretches are compositionally biased toward polar residues: residues 20-30 (PITSMSPPQEN) and 40-54 (NFFN…SRGS). Residues 105 to 411 (YEPTQNIGSG…IQDALLHPYI (307 aa)) enclose the Protein kinase domain. ATP contacts are provided by residues 111–119 (IGSGAFGIV) and lysine 134. Aspartate 231 (proton acceptor) is an active-site residue. Residues 460-482 (YSELHSGDSTGSTSDMSTNTSGE) form a disordered region. Over residues 466–481 (GDSTGSTSDMSTNTSG) the composition is skewed to low complexity.

The protein belongs to the protein kinase superfamily. CMGC Ser/Thr protein kinase family. MAP kinase subfamily. The cofactor is Mg(2+). Expressed in intestine with a stronger expression in the four most anterior cells, muscles, excretory cell, pharynx and, to a lesser extent, in hypodermis.

The enzyme catalyses L-seryl-[protein] + ATP = O-phospho-L-seryl-[protein] + ADP + H(+). The catalysed reaction is L-threonyl-[protein] + ATP = O-phospho-L-threonyl-[protein] + ADP + H(+). Its function is as follows. Serine/threonine-protein kinase involved in the postembryonic regulation of body size, mainly through control of cell growth. In particular, controls the volume of intestine, muscles and hypodermis. In addition, regulates growth, intestinal granule distribution, lifespan and number of offspring. The polypeptide is Mitogen-activated protein kinase sma-5 (Caenorhabditis elegans).